An 859-amino-acid chain; its full sequence is MYAGFYVAVHPWLETQSLHKVGHTGNLAARLHDGSYTTCFTDEWKYCFTLETPTKKDAQKIEAGVLYCAQFFRVKNKELLCLLPEKIKQLAEDVAKCLDISYTLCDSPTYEMNDSTIVVEPSLPSDPLISKEKLRHLVIIPVEDEDHFADDVLFFSTDETRTAIEDRLYQKEAANMGYQELQRSGRAILQMACRCGKTRVAYLILSNYLQGKVLYLVPGLSLLRQTLEKLYLYGISLKNVLLVGSDQTRIVLNHDNIEMTTNPVFIAKRIQEASSLLVIATYQSSTLLVDDFDLIISDECHRICGEWEIRPFTHVLLNFKKGHRLFLTATPRYDTPLSMKNRDLFGGVAFRYYLREGIEAGYVNDFELQMVAAPKLAHQLSNREETTKQIIVKQIIMALAYLKTNITSPKMLVFTRDIKQAKELYAELVDLGVYALIAHSTLPRQVILKTFTEFCSSKEPVILLNCRLFQEGVEVPELNAVFFAAPRHSPRDIIQSICRPLNKQVQKPHATIFLPLEVNTENVCLDKFSSIIPFADALASEDPRFYEHLLNPSEVAYPINWIGAHGSVSELLHLARHAIRYGTQGKIDRLTRSERLPWKAAFAELKRTVEICCRYPKINDGFHFGGATLRFDTWYKWVIKSYLQYKNKEPSSLEPYQVSDLESLQDWTTRGVGGPYPWEESMAFLETWLAQNKGELVAIDIHQGGWIGLDATPMERLSGVLTTVSQRDGRSYGKNKKLRPKKGFMIPPQQAEDLDRIFGKHNLKWRKDRVNGFLKEDEHGNYTGEPTCIQEAYRTFKEYVKTNPEYIEKYWPGYAKGKHKHQELPHIWESGLAPPRYKAFKDGNKQLIQRSPKKKDVKN.

Residues 178-349 enclose the Helicase ATP-binding domain; sequence YQELQRSGRA…KNRDLFGGVA (172 aa). 191–198 contacts ATP; the sequence is MACRCGKT. The short motif at 298–301 is the DEAH box element; the sequence is DECH. Residues 394-553 enclose the Helicase C-terminal domain; the sequence is QIIMALAYLK…RFYEHLLNPS (160 aa).

Belongs to the asfivirus helicase A859L family.

This chain is Probable helicase A859L, found in Ornithodoros (relapsing fever ticks).